The primary structure comprises 285 residues: Bifunctional protein FolD (285 aa).

NADP(+)-binding positions include 164-166, Ser-189, and Ile-230; that span reads GRS.

The protein belongs to the tetrahydrofolate dehydrogenase/cyclohydrolase family. In terms of assembly, homodimer.

The enzyme catalyses (6R)-5,10-methylene-5,6,7,8-tetrahydrofolate + NADP(+) = (6R)-5,10-methenyltetrahydrofolate + NADPH. The catalysed reaction is (6R)-5,10-methenyltetrahydrofolate + H2O = (6R)-10-formyltetrahydrofolate + H(+). It participates in one-carbon metabolism; tetrahydrofolate interconversion. In terms of biological role, catalyzes the oxidation of 5,10-methylenetetrahydrofolate to 5,10-methenyltetrahydrofolate and then the hydrolysis of 5,10-methenyltetrahydrofolate to 10-formyltetrahydrofolate. This chain is Bifunctional protein FolD, found in Oceanobacillus iheyensis (strain DSM 14371 / CIP 107618 / JCM 11309 / KCTC 3954 / HTE831).